We begin with the raw amino-acid sequence, 271 residues long: Mannosyl-3-phosphoglycerate phosphatase (271 aa).

Asp13 functions as the Nucleophile in the catalytic mechanism. The Mg(2+) site is built by Asp13, Asp15, and Asp214.

The protein belongs to the HAD-like hydrolase superfamily. MPGP family. Mg(2+) is required as a cofactor.

It is found in the cytoplasm. The enzyme catalyses 2-O-(alpha-D-mannosyl)-3-phosphoglycerate + H2O = (2R)-2-O-(alpha-D-mannosyl)-glycerate + phosphate. In Escherichia coli O139:H28 (strain E24377A / ETEC), this protein is Mannosyl-3-phosphoglycerate phosphatase.